Consider the following 401-residue polypeptide: MTLPKIKHVRAWFIGGATAEKGAGGGDYHDQGGNHWIADHIATPMSKYRDYEQSRQSFGINVLGTLIVEVEAENGQTGFAVSTAGEMGCFIVEKHLNRFIEGKCVSDIKLIHDQMLGATMYYSGSGGLVMNTISCVDLALWDLFGKVVGLPVYKLLGGAVRDEIQFYATGARPDLAKEMGFIGGKMPTHWGPHDGDAGIRKDAAMVADMREKCGPDFWLMLDCWMSQDVNYATKLAHACAPFNLKWIEECLPPQQYEGYRELKRNAPAGMMVTSGEHHGTLQSFRTLSETGIDIMQPDVGWCGGLTTLVEIAALAKSRGQLVVPHGSSVYSHHAVITFTNTPFSEFLMTSPDCSTLRPQFDPILLDEPVPVNGRIHKSVLDKPGFGVELNRDCHLKRPYSH.

Substrate contacts are provided by His29 and Arg55. Mg(2+) contacts are provided by Asp222, Glu248, and Glu276. His325 functions as the Proton acceptor in the catalytic mechanism. Glu345 is a substrate binding site.

The protein belongs to the mandelate racemase/muconate lactonizing enzyme family. RhamD subfamily. In terms of assembly, homooctamer; tetramer of dimers. Requires Mg(2+) as cofactor.

The catalysed reaction is L-rhamnonate = 2-dehydro-3-deoxy-L-rhamnonate + H2O. Functionally, catalyzes the dehydration of L-rhamnonate to 2-keto-3-deoxy-L-rhamnonate (KDR). This Salmonella heidelberg (strain SL476) protein is L-rhamnonate dehydratase.